The following is a 160-amino-acid chain: Endoribonuclease YbeY (160 aa).

Residues His-123, His-127, and His-133 each coordinate Zn(2+).

Belongs to the endoribonuclease YbeY family. It depends on Zn(2+) as a cofactor.

It is found in the cytoplasm. Single strand-specific metallo-endoribonuclease involved in late-stage 70S ribosome quality control and in maturation of the 3' terminus of the 16S rRNA. The sequence is that of Endoribonuclease YbeY from Shouchella clausii (strain KSM-K16) (Alkalihalobacillus clausii).